An 89-amino-acid polypeptide reads, in one-letter code: Small ribosomal subunit protein uS15 (89 aa).

Belongs to the universal ribosomal protein uS15 family. Part of the 30S ribosomal subunit. Forms a bridge to the 50S subunit in the 70S ribosome, contacting the 23S rRNA.

In terms of biological role, one of the primary rRNA binding proteins, it binds directly to 16S rRNA where it helps nucleate assembly of the platform of the 30S subunit by binding and bridging several RNA helices of the 16S rRNA. Forms an intersubunit bridge (bridge B4) with the 23S rRNA of the 50S subunit in the ribosome. This chain is Small ribosomal subunit protein uS15, found in Dechloromonas aromatica (strain RCB).